The primary structure comprises 178 residues: Protein FAM89A (178 aa).

The protein belongs to the FAM89 family.

In Bos taurus (Bovine), this protein is Protein FAM89A (FAM89A).